The primary structure comprises 533 residues: Purine-cytosine permease FCY2 (533 aa).

At 1-98 (MLEEGNNVYE…NAASMWFSAN (98 aa)) the chain is on the cytoplasmic side. A Glycyl lysine isopeptide (Lys-Gly) (interchain with G-Cter in ubiquitin) cross-link involves residue K16. A Phosphoserine modification is found at S18. The chain crosses the membrane as a helical span at residues 99 to 119 (MVIASYALGALGPMVFGLNFG). At 120-121 (QS) the chain is on the extracellular side. A helical membrane pass occupies residues 122–141 (VLVIIFFNIMGLIFVAFFSV). Residues 142-198 (FGAELGLRQMILSRYLVGNVTARIFSLINVIACVGWGIVNTSVSAQLLNMVNEGSGH) are Cytoplasmic-facing. The interval 165–184 (IFSLINVIACVGWGIVNTSV) is surface seeking. The chain crosses the membrane as a helical span at residues 199–218 (VCPIWAGCLIIIGGTVLVTF). The Extracellular portion of the chain corresponds to 219-256 (FGYSVIHAYEKWSWVPNFAVFLVIIAQLSRSGKFKGGE). Residues 257 to 276 (WVGGATTAGSVLSFGSSIFG) form a helical membrane-spanning segment. Residues 277–300 (FAAGWTTYAADYTVYMPKSTNKYK) are Cytoplasmic-facing. A helical transmembrane segment spans residues 301–320 (IFFSLVAGLAFPLFFTMILG). Residues 321 to 347 (AASAMAALNDPTWKAYYDKNAMGGVIY) lie on the Extracellular side of the membrane. A helical transmembrane segment spans residues 348-367 (AILVPNSLNGFGQFCCVLLA). Over 368–398 (LSTIANNIPNMYTVALSAQALWAPLAKIPRV) the chain is Cytoplasmic. A helical transmembrane segment spans residues 399-418 (VWTMAGNAATLGISIPATYY). The Extracellular portion of the chain corresponds to 419–465 (FDGFMENFMDSIGYYLAIYIAISCSEHFFYRRSFSAYNIDDWDNWEH). Residues 466–485 (LPIGIAGTAALIVGAFGVAL) form a helical membrane-spanning segment. The Cytoplasmic portion of the chain corresponds to 486–533 (GMCQTYWVGEIGRLIGKYGGDIGFELGASWAFIIYNILRPLELKYFGR).

It belongs to the purine-cytosine permease (2.A.39) family. Post-translationally, not N-glycosylated.

The protein localises to the membrane. Its function is as follows. This permease has a broad specificity towards purines, and also transport cytosine and 5-methylcytosine but neither uracil nor thymine. This Saccharomyces cerevisiae (strain ATCC 204508 / S288c) (Baker's yeast) protein is Purine-cytosine permease FCY2 (FCY2).